The sequence spans 335 residues: Acetyl-coenzyme A carboxylase carboxyl transferase subunit alpha (335 aa).

The CoA carboxyltransferase C-terminal domain maps to 40 to 294 (QLETLATRRR…KGAIEKHLNE (255 aa)).

The protein belongs to the AccA family. As to quaternary structure, acetyl-CoA carboxylase is a heterohexamer composed of biotin carboxyl carrier protein (AccB), biotin carboxylase (AccC) and two subunits each of ACCase subunit alpha (AccA) and ACCase subunit beta (AccD).

It localises to the cytoplasm. The enzyme catalyses N(6)-carboxybiotinyl-L-lysyl-[protein] + acetyl-CoA = N(6)-biotinyl-L-lysyl-[protein] + malonyl-CoA. The protein operates within lipid metabolism; malonyl-CoA biosynthesis; malonyl-CoA from acetyl-CoA: step 1/1. Component of the acetyl coenzyme A carboxylase (ACC) complex. First, biotin carboxylase catalyzes the carboxylation of biotin on its carrier protein (BCCP) and then the CO(2) group is transferred by the carboxyltransferase to acetyl-CoA to form malonyl-CoA. This chain is Acetyl-coenzyme A carboxylase carboxyl transferase subunit alpha, found in Prochlorococcus marinus subsp. pastoris (strain CCMP1986 / NIES-2087 / MED4).